We begin with the raw amino-acid sequence, 77 residues long: Translation initiation factor IF-1, chloroplastic (77 aa).

The region spanning 1 to 71 (MKEQKWIHEG…TRGRIIYRLR (71 aa)) is the S1-like domain.

This sequence belongs to the IF-1 family. Component of the 30S ribosomal translation pre-initiation complex which assembles on the 30S ribosome in the order IF-2 and IF-3, IF-1 and N-formylmethionyl-tRNA(fMet); mRNA recruitment can occur at any time during PIC assembly.

Its subcellular location is the plastid. It is found in the chloroplast. One of the essential components for the initiation of protein synthesis. Stabilizes the binding of IF-2 and IF-3 on the 30S subunit to which N-formylmethionyl-tRNA(fMet) subsequently binds. Helps modulate mRNA selection, yielding the 30S pre-initiation complex (PIC). Upon addition of the 50S ribosomal subunit IF-1, IF-2 and IF-3 are released leaving the mature 70S translation initiation complex. This chain is Translation initiation factor IF-1, chloroplastic, found in Montinia caryophyllacea (Wild clove bush).